A 413-amino-acid chain; its full sequence is Serine/threonine transporter SstT (413 aa).

Helical transmembrane passes span 18 to 38, 52 to 72, 86 to 106, 119 to 139, 145 to 165, 196 to 216, 221 to 241, 292 to 312, 320 to 340, and 360 to 380; these read LSLV…ALFA, FVSA…MASI, ILFL…IASM, IAVS…LSVV, ALMN…GVAI, LGIF…ALIG, LAVL…LIVF, VSIP…ITVL, LGIA…AICA, and LFGI…IIGV.

This sequence belongs to the dicarboxylate/amino acid:cation symporter (DAACS) (TC 2.A.23) family.

It localises to the cell inner membrane. It carries out the reaction L-serine(in) + Na(+)(in) = L-serine(out) + Na(+)(out). The enzyme catalyses L-threonine(in) + Na(+)(in) = L-threonine(out) + Na(+)(out). Its function is as follows. Involved in the import of serine and threonine into the cell, with the concomitant import of sodium (symport system). This is Serine/threonine transporter SstT from Pseudomonas fluorescens (strain Pf0-1).